The chain runs to 285 residues: Polyamine aminopropyltransferase (285 aa).

The PABS domain occupies 5–241 (DNWYIEHFQP…GWWSVTMASK (237 aa)). An S-methyl-5'-thioadenosine-binding site is contributed by Gln-35. Spermidine-binding residues include His-66 and Asp-90. S-methyl-5'-thioadenosine is bound by residues Asp-110 and 141-142 (DG). Asp-160 serves as the catalytic Proton acceptor. Residue 160–163 (DSTD) coordinates spermidine. Pro-167 is a binding site for S-methyl-5'-thioadenosine.

It belongs to the spermidine/spermine synthase family. As to quaternary structure, homodimer or homotetramer.

Its subcellular location is the cytoplasm. The catalysed reaction is S-adenosyl 3-(methylsulfanyl)propylamine + putrescine = S-methyl-5'-thioadenosine + spermidine + H(+). It functions in the pathway amine and polyamine biosynthesis; spermidine biosynthesis; spermidine from putrescine: step 1/1. Catalyzes the irreversible transfer of a propylamine group from the amino donor S-adenosylmethioninamine (decarboxy-AdoMet) to putrescine (1,4-diaminobutane) to yield spermidine. This chain is Polyamine aminopropyltransferase, found in Xanthomonas oryzae pv. oryzae (strain MAFF 311018).